Consider the following 344-residue polypeptide: DNA-directed RNA polymerase subunit alpha (344 aa).

The alpha N-terminal domain (alpha-NTD) stretch occupies residues 1–246; that stretch reads MPVEKFLKDF…EFLFPLIDFE (246 aa). An alpha C-terminal domain (alpha-CTD) region spans residues 259–344; that stretch reads ESSNLLDMSI…VLSKNVKISE (86 aa).

It belongs to the RNA polymerase alpha chain family. Homodimer. The RNAP catalytic core consists of 2 alpha, 1 beta, 1 beta' and 1 omega subunit. When a sigma factor is associated with the core the holoenzyme is formed, which can initiate transcription.

It catalyses the reaction RNA(n) + a ribonucleoside 5'-triphosphate = RNA(n+1) + diphosphate. DNA-dependent RNA polymerase catalyzes the transcription of DNA into RNA using the four ribonucleoside triphosphates as substrates. In Borrelia garinii subsp. bavariensis (strain ATCC BAA-2496 / DSM 23469 / PBi) (Borreliella bavariensis), this protein is DNA-directed RNA polymerase subunit alpha.